Here is a 305-residue protein sequence, read N- to C-terminus: RNA-binding protein with serine-rich domain 1 (305 aa).

A compositionally biased stretch (basic residues) spans 1–10; it reads MDLSGVKKKS. Positions 1–161 are necessary for interaction with SRP54, nuclear localization and exon-skipping; that stretch reads MDLSGVKKKS…KRRSPSPKPT (161 aa). Residues 1-170 are disordered; sequence MDLSGVKKKS…TKVHIGRLTR (170 aa). Positions 1–220 are necessary for interaction with the cleaved p110 isoform of CDC2L1; the sequence is MDLSGVKKKS…ENPDEAEKAL (220 aa). Residues K7 and K15 each participate in a glycyl lysine isopeptide (Lys-Gly) (interchain with G-Cter in SUMO2) cross-link. Positions 33-59 are enriched in basic and acidic residues; that stretch reads DRSDEKSKDRSKDKGATKESSEKDRGR. S53 is modified (phosphoserine; by CK2). Low complexity predominate over residues 68-126; the sequence is ASSGSSSTRSRSSSTSSSGSSTSTGSSSGSSSSSASSRSGSSSTSRSSSSSSSSGSPSP. The necessary for interactions with UPF2 and UPF3B and UPF2-dependent NMD stretch occupies residues 69–121; that stretch reads SSGSSSTRSRSSSTSSSGSSTSTGSSSGSSSSSASSRSGSSSTSRSSSSSSSS. Composition is skewed to basic residues over residues 127–143 and 151–167; these read SRRRHDNRRRSRSKSKP and RKRRSPSPKPTKVHIGR. Phosphoserine is present on residues S155 and S157. Positions 156–242 are necessary for interaction with PNN and exon-skipping; sequence PSPKPTKVHI…ITATAVLAPW (87 aa). The segment at 159-244 is interaction with SAP18 and ACIN1; sequence KPTKVHIGRL…ATAVLAPWPR (86 aa). T161 carries the phosphothreonine modification. One can recognise an RRM domain in the interval 161–240; sequence TKVHIGRLTR…QEITATAVLA (80 aa). K218 carries the post-translational modification N6-acetyllysine. A necessary for interaction with TRA2B, nuclear localization and exon-skipping region spans residues 238-305; sequence VLAPWPRPPP…RSRSSSNSSR (68 aa). The interval 240–305 is disordered; the sequence is APWPRPPPRR…RSRSSSNSSR (66 aa). A compositionally biased stretch (pro residues) spans 242–262; the sequence is WPRPPPRRFSPPRRMLPPPPM. The segment covering 266–298 has biased composition (basic residues); the sequence is SPPRMRRRSRSPRRRSPVRRRSRSPGRRRHRSR.

The protein belongs to the splicing factor SR family. In terms of assembly, found in mRNA splicing-dependent exon junction complexes (EJC). Found in a post-splicing complex with NXF1, RBM8A, UPF1, UPF2, UPF3A, UPF3B and RNPS1. Component of the heterotrimeric ASAP (apoptosis- and splicing-associated protein) and PSAP complexes consisting of RNPS1, SAP18 and either ACIN1 or PNN, respectively; the ASAP and PSAP complexes probably are formed mutually exclusive. Component of the active spliceosome. Associates with polysomes. Interacts with the cleaved p110 isoform of CDC2L1, CSNK2A1, PNN, SART3, SRP54, SRRM1 and TRA2B/SFRS10. In terms of processing, phosphorylated on one or more of the four Ser/Thr residues (Ser-43, Thr-49, Ser-52 or Ser-53). Ser-53 phosphorylation site is important for splicing and translation stimulation activity in vitro. In terms of tissue distribution, ubiquitous.

The protein resides in the nucleus. It is found in the nucleus speckle. Its subcellular location is the cytoplasm. In terms of biological role, part of pre- and post-splicing multiprotein mRNP complexes. Auxiliary component of the splicing-dependent multiprotein exon junction complex (EJC) deposited at splice junction on mRNAs. The EJC is a dynamic structure consisting of core proteins and several peripheral nuclear and cytoplasmic associated factors that join the complex only transiently either during EJC assembly or during subsequent mRNA metabolism. Component of the ASAP and PSAP complexes which bind RNA in a sequence-independent manner and are proposed to be recruited to the EJC prior to or during the splicing process and to regulate specific excision of introns in specific transcription subsets. The ASAP complex can inhibit RNA processing during in vitro splicing reactions. The ASAP complex promotes apoptosis and is disassembled after induction of apoptosis. Enhances the formation of the ATP-dependent A complex of the spliceosome. Involved in both constitutive splicing and, in association with SRP54 and TRA2B/SFRS10, in distinctive modulation of alternative splicing in a substrate-dependent manner. Involved in the splicing modulation of BCL2L1/Bcl-X (and probably other apoptotic genes); specifically inhibits formation of proapoptotic isoforms such as Bcl-X(S); the activity is different from the established EJC assembly and function. Participates in mRNA 3'-end cleavage. Involved in UPF2-dependent nonsense-mediated decay (NMD) of mRNAs containing premature stop codons. Also mediates increase of mRNA abundance and translational efficiency. Binds spliced mRNA 20-25 nt upstream of exon-exon junctions. This is RNA-binding protein with serine-rich domain 1 (RNPS1) from Homo sapiens (Human).